The following is a 354-amino-acid chain: Probable tartrate dehydrogenase/decarboxylase (354 aa).

Mn(2+)-binding residues include aspartate 221, aspartate 245, and aspartate 249.

The protein belongs to the isocitrate and isopropylmalate dehydrogenases family. Requires Mg(2+) as cofactor. Mn(2+) is required as a cofactor. It depends on K(+) as a cofactor.

It carries out the reaction tartrate + NAD(+) = 2-hydroxy-3-oxosuccinate + NADH + H(+). It catalyses the reaction (2R,3S)-tartrate + NAD(+) = 2-hydroxy-3-oxosuccinate + NADH + H(+). The enzyme catalyses (2R,3R)-tartrate + NAD(+) = 2-hydroxy-3-oxosuccinate + NADH + H(+). The catalysed reaction is (2R,3R)-tartrate + H(+) = (R)-glycerate + CO2. It carries out the reaction (R)-malate + NAD(+) = pyruvate + CO2 + NADH. Has multiple catalytic activities. Apart from catalyzing the oxidation of (+)-tartrate to oxaloglycolate, also converts meso-tartrate to D-glycerate and catalyzes the oxidative decarboxylation of D-malate to pyruvate. The sequence is that of Probable tartrate dehydrogenase/decarboxylase (ycsA) from Bacillus subtilis (strain 168).